The sequence spans 372 residues: ATP phosphoribosyltransferase regulatory subunit (372 aa).

Belongs to the class-II aminoacyl-tRNA synthetase family. HisZ subfamily. Heteromultimer composed of HisG and HisZ subunits.

It is found in the cytoplasm. It functions in the pathway amino-acid biosynthesis; L-histidine biosynthesis; L-histidine from 5-phospho-alpha-D-ribose 1-diphosphate: step 1/9. Functionally, required for the first step of histidine biosynthesis. May allow the feedback regulation of ATP phosphoribosyltransferase activity by histidine. In Rhizobium rhizogenes (strain K84 / ATCC BAA-868) (Agrobacterium radiobacter), this protein is ATP phosphoribosyltransferase regulatory subunit.